A 106-amino-acid polypeptide reads, in one-letter code: Prothymosin alpha-B (106 aa).

Residues 1–39 (MADAKVDSATEISAKDLKEKKLIEEKENGKDATNGKENE) are compositionally biased toward basic and acidic residues. The segment at 1–106 (MADAKVDSAT…DVDPKKQKVN (106 aa)) is disordered. S8 is modified (phosphoserine). T10 is modified (phosphothreonine). Composition is skewed to acidic residues over residues 40–76 (ENGE…DEDL) and 85–98 (DDDE…EDDV).

It belongs to the pro/parathymosin family. In terms of tissue distribution, uniformly expressed in all embryonic cells at 4 and 8 hpf. At the 20-somite stage (18 hpf), ubiquitously expressed in the developing nervous system, in the tail bud and in the pronephric ducts. Also expressed in some placodes, including the anterior lateral line placode, otic vesicle and olfactory placode. At 27 hpf, strong expression persists in the central nervous system and the olfactory placode. Expressed strongly in the eyes and the pectoral fin buds. In the tail region, expressed in the spinal cord, in the posterior lateral line precursors, and persists in the pronephric ducts. At 48 hpf, expressed in all head territories including the developing brain, eyes, and pharyngeal arches. More caudally, expression persists in the pectoral fin buds, the spinal cord and, for the first time, appears in the intestine. At 72 hpf, expressed only in restricted regions of the brain, in pharyngeal arches region and in the amacrine cells and the horizontal cells of the retina.

The protein localises to the nucleus. The sequence is that of Prothymosin alpha-B from Danio rerio (Zebrafish).